The chain runs to 110 residues: Small ribosomal subunit protein eS25 (110 aa).

Positions 1–39 (MPPKAAGGKSKQIQASKAAAKGSSGGAGRKKWSKGRSRE) are disordered.

It belongs to the eukaryotic ribosomal protein eS25 family.

The chain is Small ribosomal subunit protein eS25 (rps25) from Dictyostelium discoideum (Social amoeba).